The primary structure comprises 500 residues: Protein nucleotidyltransferase YdiU (500 aa).

Residues Gly96, Gly98, Arg99, Lys119, Asp131, Gly132, Arg182, and Arg189 each coordinate ATP. Asp258 serves as the catalytic Proton acceptor. Residues Asn259 and Asp268 each coordinate Mg(2+). An ATP-binding site is contributed by Asp268.

This sequence belongs to the SELO family. It depends on Mg(2+) as a cofactor. Requires Mn(2+) as cofactor.

The catalysed reaction is L-seryl-[protein] + ATP = 3-O-(5'-adenylyl)-L-seryl-[protein] + diphosphate. It carries out the reaction L-threonyl-[protein] + ATP = 3-O-(5'-adenylyl)-L-threonyl-[protein] + diphosphate. The enzyme catalyses L-tyrosyl-[protein] + ATP = O-(5'-adenylyl)-L-tyrosyl-[protein] + diphosphate. It catalyses the reaction L-histidyl-[protein] + UTP = N(tele)-(5'-uridylyl)-L-histidyl-[protein] + diphosphate. The catalysed reaction is L-seryl-[protein] + UTP = O-(5'-uridylyl)-L-seryl-[protein] + diphosphate. It carries out the reaction L-tyrosyl-[protein] + UTP = O-(5'-uridylyl)-L-tyrosyl-[protein] + diphosphate. Functionally, nucleotidyltransferase involved in the post-translational modification of proteins. It can catalyze the addition of adenosine monophosphate (AMP) or uridine monophosphate (UMP) to a protein, resulting in modifications known as AMPylation and UMPylation. In Rhizobium johnstonii (strain DSM 114642 / LMG 32736 / 3841) (Rhizobium leguminosarum bv. viciae), this protein is Protein nucleotidyltransferase YdiU.